Reading from the N-terminus, the 469-residue chain is MCDLIEPQPAEKIGKMKKLRRTLSESFSRIALKKEDTTFDEICVTKMSTRNCQGTDSVIKHLDTIPEDKKVRVQRTQSTFDPFEKPANQVKRVHSENNACINFKSSSAGKESPKVRRHSSPSSPTSPKFGKADSYEKLEKLGEGSYATVYKGKSKVNGKLVALKVIRLQEEEGTPFTAIREASLLKGLKHANIVLLHDIIHTKETLTLVFEYVHTDLCQYMDKHPGGLHPDNVKLFLFQLLRGLSYIHQRYILHRDLKPQNLLISDTGELKLADFGLARAKSVPSHTYSNEVVTLWYRPPDVLLGSTEYSTCLDMWGVGCIFVEMIQGVAAFPGMKDIQDQLERIFLVLGTPNEDTWPGVHSLPHFKPERFTVYSSKSLRQAWNKLSYVNHAEDLASKLLQCSPKNRLSAQAALSHEYFSDLPPRLWELTDMSSIFTVPNVRLQPEAGESMRAFGKNNSYGKSLSNSKH.

Phosphoserine occurs at positions 24, 78, and 95. Residues 103 to 133 form a disordered region; that stretch reads FKSSSAGKESPKVRRHSSPSSPTSPKFGKAD. The residue at position 134 (Ser-134) is a Phosphoserine. Residues 135–419 form the Protein kinase domain; it reads YEKLEKLGEG…AQAALSHEYF (285 aa). ATP-binding positions include 141–149 and Lys-164; that span reads LGEGSYATV. The active-site Proton acceptor is the Asp-256. The interval 449–469 is disordered; the sequence is ESMRAFGKNNSYGKSLSNSKH. Polar residues predominate over residues 456–469; that stretch reads KNNSYGKSLSNSKH.

Belongs to the protein kinase superfamily. CMGC Ser/Thr protein kinase family. CDC2/CDKX subfamily. In terms of assembly, found in a complex with LRP6, CCNY and CAPRIN2 during G2/M stage; CAPRIN2 functions as a scaffold for the complex by binding to CCNY via its N terminus and to CDK14 via its C terminus. Interacts with CCNY; CCNY mediates its recruitment to the plasma membrane and promotes phosphorylation of LRP6. Interacts with CCDN3 and CDKN1A. Interacts with SEPT8. Interacts with 14-3-3 proteina YWHAB, YWHAE, YWHAH and YWHAQ. In terms of tissue distribution, in the adult, widely expressed at low levels except in brain, kidney and testis where expression is high. In the brain, detected in cortex, hippocampus, dentate gyrus, amygdala cortex, parasubiculum and cerebellum. In the embryo, expressed predominantly in the nervous system.

It localises to the cell membrane. It is found in the cytoplasm. The protein resides in the nucleus. The catalysed reaction is L-seryl-[protein] + ATP = O-phospho-L-seryl-[protein] + ADP + H(+). The enzyme catalyses L-threonyl-[protein] + ATP = O-phospho-L-threonyl-[protein] + ADP + H(+). Serine/threonine-protein kinase activity is promoted by associated cyclins CCDN3 and CCNY and repressed by CDKN1A. Its function is as follows. Serine/threonine-protein kinase involved in the control of the eukaryotic cell cycle, whose activity is controlled by an associated cyclin. Acts as a cell-cycle regulator of Wnt signaling pathway during G2/M phase by mediating the phosphorylation of LRP6 at 'Ser-1490', leading to the activation of the Wnt signaling pathway. Acts as a regulator of cell cycle progression and cell proliferation via its interaction with CCDN3. Phosphorylates RB1 in vitro, however the relevance of such result remains to be confirmed in vivo. May also play a role in meiosis, neuron differentiation and may indirectly act as a negative regulator of insulin-responsive glucose transport. The sequence is that of Cyclin-dependent kinase 14 (Cdk14) from Mus musculus (Mouse).